The primary structure comprises 374 residues: MGKKLKYIIDLKFIEEIPEEERRELEKVTEKFAFRTNTYYNSLINWDNPNDPIRRIVIPTTEELEVWGKLDASNESKYMKVHGLEHKYPDTALLLVTDVCGIYCRFCFRKRLFMNDNDEVARDVSEGLEYIRNHPEINNVLLTGGDPLILATFKLEKILKALAEIPHVRIVRIGSKMLAVNPFRVLDDPKLLELFEWFNTETGKKLYLMNHFNHPRELTKEARKAVELVQKTGTTLTNQTPILKGINDDFETLKTLLEELSFIGVPPYYVFQCRPTAGNKAYSTPIEETIDLVEAVRAEVSGLAARVRYVMSHETGKIEILGKTDEHIFFRYHRAADPENRGKFMVFKRNPEAHWFDDYTELVAEYKSSLSGVS.

The region spanning 86–314 (HKYPDTALLL…ARVRYVMSHE (229 aa)) is the Radical SAM core domain. Cys-100, Cys-104, and Cys-107 together coordinate [4Fe-4S] cluster. Lys-317 is subject to N6-(pyridoxal phosphate)lysine.

This sequence belongs to the radical SAM superfamily. KamA family. [4Fe-4S] cluster is required as a cofactor. The cofactor is pyridoxal 5'-phosphate.

The polypeptide is Putative L-lysine 2,3-aminomutase aq_1632 (Aquifex aeolicus (strain VF5)).